Reading from the N-terminus, the 506-residue chain is Glutamate--tRNA ligase (506 aa).

The 'HIGH' region signature appears at 21–31 (PSPTGTPHVGM). Positions 265–269 (KLSKR) match the 'KMSKS' region motif. An ATP-binding site is contributed by K268.

This sequence belongs to the class-I aminoacyl-tRNA synthetase family. Glutamate--tRNA ligase type 1 subfamily. As to quaternary structure, monomer.

It is found in the cytoplasm. It carries out the reaction tRNA(Glu) + L-glutamate + ATP = L-glutamyl-tRNA(Glu) + AMP + diphosphate. In terms of biological role, catalyzes the attachment of glutamate to tRNA(Glu) in a two-step reaction: glutamate is first activated by ATP to form Glu-AMP and then transferred to the acceptor end of tRNA(Glu). This is Glutamate--tRNA ligase from Bifidobacterium longum (strain DJO10A).